Reading from the N-terminus, the 340-residue chain is MNICVNSLYRLSTPQFQNLYSEEVSDEGLALLIREVENGDQNCIDLLCNLALRNDDLGHKVEKILFDLFSGKKHGSPDIDKKINQACLMLYQTANNDIAKNNTDFKKLHIPSRLLYMAGSATPDFSKKLEIAHKILGDQIAQTEEEQVGVENLWCPARMVSSDELSRATQGMTQGLSLSVNYPIGLIHPTTGENVLSAQLHEKVAQSGLSDNEVFLINTESHWIFCLFYKIAEKIKCLIFNTHHDLNQNTKQEIRAAAKIAGASEEGDVNFIEIDLQNNVPNGCGLFCFQALQLLSATGQNDPVAVLREYSENFLRLSVEEQTLFNTETRRKIHEYSLTS.

Histidine 222 is an active-site residue. Cysteine 284 functions as the Nucleophile in the catalytic mechanism.

The protein belongs to the peptidase C79 family.

It is found in the secreted. The protein localises to the host cytoplasm. In terms of biological role, effector proteins function to alter host cell physiology and promote bacterial survival in host tissues. This protease targets the host cell ubiquitin pathway by acting as a deubiquitinase in infected host cells. This Salmonella arizonae (strain ATCC BAA-731 / CDC346-86 / RSK2980) protein is Deubiquitinase SseL (sseL).